Reading from the N-terminus, the 255-residue chain is 5-oxoprolinase subunit A (255 aa).

This sequence belongs to the LamB/PxpA family. As to quaternary structure, forms a complex composed of PxpA, PxpB and PxpC.

The catalysed reaction is 5-oxo-L-proline + ATP + 2 H2O = L-glutamate + ADP + phosphate + H(+). In terms of biological role, catalyzes the cleavage of 5-oxoproline to form L-glutamate coupled to the hydrolysis of ATP to ADP and inorganic phosphate. The chain is 5-oxoprolinase subunit A from Thermococcus sibiricus (strain DSM 12597 / MM 739).